Here is a 327-residue protein sequence, read N- to C-terminus: Aldo-keto reductase family 7 member A3 (327 aa).

Ser-2 carries the post-translational modification Phosphoserine. The NADP(+) site is built by Met-13, Arg-18, and Asp-40. Catalysis depends on Tyr-45, which acts as the Proton donor. Position 109 (His-109) interacts with citrate. Residues Asn-140, Asn-194, Leu-196, Gly-198, Arg-204, and Arg-218 each coordinate NADP(+). Tyr-228 and Arg-231 together coordinate citrate. Ser-286, Gln-290, Gln-293, Asn-294, and Arg-327 together coordinate NADP(+).

The protein belongs to the aldo/keto reductase family. Aldo/keto reductase 2 subfamily. In terms of assembly, homodimer. Heterodimer with AKR7A2.

Its subcellular location is the cytoplasm. The enzyme catalyses a primary alcohol + NADP(+) = an aldehyde + NADPH + H(+). It catalyses the reaction aflatoxin B1 dialdehyde + NADPH + H(+) = aflatoxin B1 C(6a)-monoaldehyde + NADP(+). It carries out the reaction aflatoxin B1 dialdehyde + NADPH + H(+) = aflatoxin B1 C(8)-monoaldehyde + NADP(+). The catalysed reaction is aflatoxin B1 C(6a)-monoaldehyde + NADPH + 2 H(+) = aflatoxin B1 triol + NADP(+). Its activity is regulated as follows. Inhibited by citrate. In terms of biological role, catalyzes the NADPH-dependent reduction of various carbonyl-containing compounds, including aldehydes, ketones, and toxic products from cellular metabolism or environmental exposure. Can reduce the dialdehyde form of aflatoxin B1 (AFB1) into alcohol derivatives, via monoaldehydes intermediates, thus preventing the formation of protein adducts that contribute to AFB1-induced toxicity. This is Aldo-keto reductase family 7 member A3 from Rattus norvegicus (Rat).